We begin with the raw amino-acid sequence, 275 residues long: Erythroagglutinating phytohemagglutinin (275 aa).

Positions M1 to S21 are cleaved as a signal peptide. N-linked (GlcNAc...) (high mannose) asparagine glycosylation is present at N33. 2 N-linked (GlcNAc...) asparagine glycosylation sites follow: N81 and N101.

Belongs to the leguminous lectin family.

Functionally, this insecticidal carbohydrate-binding lectin is toxic for the cowpea weevil. The chain is Erythroagglutinating phytohemagglutinin (DLEC1) from Phaseolus vulgaris (Kidney bean).